Here is a 247-residue protein sequence, read N- to C-terminus: 6-carboxyhexanoate--CoA ligase (247 aa).

This sequence belongs to the BioW family. In terms of assembly, homodimer. The cofactor is Mg(2+).

The catalysed reaction is heptanedioate + ATP + CoA = 6-carboxyhexanoyl-CoA + AMP + diphosphate. Its pathway is metabolic intermediate metabolism; pimeloyl-CoA biosynthesis; pimeloyl-CoA from pimelate: step 1/1. In terms of biological role, catalyzes the transformation of pimelate into pimeloyl-CoA with concomitant hydrolysis of ATP to AMP. The chain is 6-carboxyhexanoate--CoA ligase from Corynebacterium diphtheriae (strain ATCC 700971 / NCTC 13129 / Biotype gravis).